A 490-amino-acid polypeptide reads, in one-letter code: Probable cytosol aminopeptidase (490 aa).

Lys-262 and Asp-267 together coordinate Mn(2+). Lys-274 is a catalytic residue. Residues Asp-285, Asp-344, and Glu-346 each coordinate Mn(2+). Residue Arg-348 is part of the active site.

This sequence belongs to the peptidase M17 family. The cofactor is Mn(2+).

Its subcellular location is the cytoplasm. The enzyme catalyses Release of an N-terminal amino acid, Xaa-|-Yaa-, in which Xaa is preferably Leu, but may be other amino acids including Pro although not Arg or Lys, and Yaa may be Pro. Amino acid amides and methyl esters are also readily hydrolyzed, but rates on arylamides are exceedingly low.. The catalysed reaction is Release of an N-terminal amino acid, preferentially leucine, but not glutamic or aspartic acids.. Presumably involved in the processing and regular turnover of intracellular proteins. Catalyzes the removal of unsubstituted N-terminal amino acids from various peptides. The polypeptide is Probable cytosol aminopeptidase (Xanthomonas axonopodis pv. citri (strain 306)).